The primary structure comprises 372 residues: Ciliary neurotrophic factor receptor subunit alpha (372 aa).

The signal sequence occupies residues 1–22 (MAASVPWACCAVLAAAAAAVYT). One can recognise an Ig-like C2-type domain in the interval 27–104 (PQEAPHVQYE…WHLRHQVLLH (78 aa)). C46 and C89 are disulfide-bonded. Residues N60, N70, N142, and N190 are each glycosylated (N-linked (GlcNAc...) asparagine). 2 Fibronectin type-III domains span residues 108–205 (PPRE…VKPD) and 206–306 (PPEN…TEEP). The WSXWS motif motif lies at 290-294 (WSDWS). Residues 301–338 (PWTEEPRHLTTEAQAPETTTSTTSSLAPPPTTKICDPG) form a disordered region. A compositionally biased stretch (low complexity) spans 311 to 326 (TEAQAPETTTSTTSSL). S342 carries the GPI-anchor amidated serine lipid modification. Residues 343-372 (GGGPSILFLTSVPVTLVLAAAAATANNLLI) constitute a propeptide, removed in mature form.

The protein belongs to the type I cytokine receptor family. Type 3 subfamily. Forms a heterotrimer with LIFR and IL6ST. Interacts with heterodimeric neurotropic cytokine composed of CLCF1/CLC and CRLF1/CLF-1. Either alone or in complex with the heterodimer CLCF1-CRLF1 interacts with SORL1; this interaction may promote internalization and lysosomal degradation.

Its subcellular location is the cell membrane. Its function is as follows. Binds to CNTF. The alpha subunit provides the receptor specificity. The protein is Ciliary neurotrophic factor receptor subunit alpha (Cntfr) of Mus musculus (Mouse).